A 337-amino-acid polypeptide reads, in one-letter code: Glutaredoxin-3 (337 aa).

An N-acetylalanine modification is found at alanine 2. A Thioredoxin domain is found at 2–119; it reads AAGAAEAGEA…LTKKVQRHVS (118 aa). Phosphoserine is present on serine 119. Glutaredoxin domains are found at residues 144 to 238 and 239 to 337; these read HAAP…PKLE and ERLK…KGEN. [2Fe-2S] cluster is bound by residues cysteine 161 and cysteine 263.

Homodimer; the homodimer is independent of 2Fe-2S clusters. Heterotrimer; forms a heterotrimeric complex composed by two BOLA2 molecules and one GLRX3 molecule; linked by [2Fe-2S] clusters. Interacts (via N-terminus) with PRKCQ/PKC-theta. Interacts (via C-terminus) with CSRP3. Interacts with CSRP2.

Its subcellular location is the cytoplasm. The protein localises to the cytosol. The protein resides in the cell cortex. It is found in the myofibril. It localises to the sarcomere. Its subcellular location is the z line. In terms of biological role, together with BOLA2, acts as a cytosolic iron-sulfur (Fe-S) cluster assembly factor that facilitates [2Fe-2S] cluster insertion into a subset of cytosolic proteins. Acts as a critical negative regulator of cardiac hypertrophy and a positive inotropic regulator. Required for hemoglobin maturation. Does not possess any thyoredoxin activity since it lacks the conserved motif that is essential for catalytic activity. The protein is Glutaredoxin-3 (Glrx3) of Mus musculus (Mouse).